Consider the following 590-residue polypeptide: RNA-binding protein 47 (590 aa).

The span at 1 to 21 shows a compositional bias: polar residues; it reads MTAEDSTTAMNSDPTVGSSTK. The disordered stretch occupies residues 1 to 26; that stretch reads MTAEDSTTAMNSDPTVGSSTKVPEGV. RRM domains are found at residues 71 to 149, 151 to 233, and 246 to 318; these read CEVF…CSVD, CRLF…WAEP, and KILY…LAKP. Asymmetric dimethylarginine; alternate is present on residues arginine 396 and arginine 407. Arginine 396 and arginine 407 each carry omega-N-methylarginine; alternate.

The protein belongs to the RRM RBM47 family. Homodimer. Interacts with A1CF. Interacts with APOBEC1; form an mRNA editing complex. Interacts with RBPMS.

Its subcellular location is the nucleus. It localises to the cytoplasm. Its function is as follows. Single-stranded RNA-binding protein that functions in a variety of RNA processes, including alternative splicing, RNA stabilization, and RNA editing. Functions as an enzyme-substrate adapter for the cytidine deaminase APOBEC1. With APOBEC1 forms an mRNA editing complex involved into cytidine to uridine editing of a variety of mRNA molecules. Through the binding of their 3'UTR, also stabilizes a variety of mRNAs and regulates the expression of genes such as the interferon alpha/beta receptor and interleukin-10. Also involved in the alternative splicing of several genes including TJP1. Binds the pre-mRNA (U)GCAUG consensus sequences in downstream intronic regions of alternative exons regulating their exclusion and inclusion into mRNAs. Independently of its RNA-binding activity, could negatively regulate MAVS by promoting its lysosomal degradation. This Rattus norvegicus (Rat) protein is RNA-binding protein 47.